A 217-amino-acid chain; its full sequence is Thymidylate kinase (217 aa).

7 to 14 (GIDGAGKS) contacts ATP.

Belongs to the thymidylate kinase family.

The catalysed reaction is dTMP + ATP = dTDP + ADP. Phosphorylation of dTMP to form dTDP in both de novo and salvage pathways of dTTP synthesis. This chain is Thymidylate kinase, found in Pelodictyon phaeoclathratiforme (strain DSM 5477 / BU-1).